The sequence spans 126 residues: Holo-[acyl-carrier-protein] synthase (126 aa).

Aspartate 9 and glutamate 58 together coordinate Mg(2+).

It belongs to the P-Pant transferase superfamily. AcpS family. Mg(2+) serves as cofactor.

It localises to the cytoplasm. It catalyses the reaction apo-[ACP] + CoA = holo-[ACP] + adenosine 3',5'-bisphosphate + H(+). Functionally, transfers the 4'-phosphopantetheine moiety from coenzyme A to a Ser of acyl-carrier-protein. This is Holo-[acyl-carrier-protein] synthase from Salmonella paratyphi B (strain ATCC BAA-1250 / SPB7).